Consider the following 93-residue polypeptide: Mammaglobin-A (93 aa).

An N-terminal signal peptide occupies residues 1–18 (MKLLMVLMLAALSQHCYA). N-linked (GlcNAc...) asparagine glycans are attached at residues N53 and N68.

Belongs to the secretoglobin family. Lipophilin subfamily. As to expression, mammary gland specific. Over-expressed in breast cancer.

It localises to the secreted. The protein is Mammaglobin-A (SCGB2A2) of Homo sapiens (Human).